The following is a 435-amino-acid chain: Adenylosuccinate synthetase (435 aa).

Residues 17–23 and 45–47 each bind GTP; these read GDEGKGK and GHT. Catalysis depends on aspartate 18, which acts as the Proton acceptor. 2 residues coordinate Mg(2+): aspartate 18 and glycine 45. Residues 18–21, 43–46, threonine 134, arginine 148, glutamine 229, threonine 244, and arginine 308 each bind IMP; these read DEGK and NAGH. Histidine 46 serves as the catalytic Proton donor. 304–310 serves as a coordination point for substrate; it reads SVTGRPR. GTP-binding positions include arginine 310, 336–338, and 418–420; these read KLD and STG.

It belongs to the adenylosuccinate synthetase family. Homodimer. Requires Mg(2+) as cofactor.

The protein localises to the cytoplasm. It catalyses the reaction IMP + L-aspartate + GTP = N(6)-(1,2-dicarboxyethyl)-AMP + GDP + phosphate + 2 H(+). It participates in purine metabolism; AMP biosynthesis via de novo pathway; AMP from IMP: step 1/2. Plays an important role in the de novo pathway of purine nucleotide biosynthesis. Catalyzes the first committed step in the biosynthesis of AMP from IMP. The chain is Adenylosuccinate synthetase from Bordetella parapertussis (strain 12822 / ATCC BAA-587 / NCTC 13253).